Consider the following 65-residue polypeptide: SPbeta prophage-derived uncharacterized protein YopU (65 aa).

This is SPbeta prophage-derived uncharacterized protein YopU (yopU) from Bacillus subtilis (strain 168).